The sequence spans 89 residues: Small ribosomal subunit protein uS15 (89 aa).

The protein belongs to the universal ribosomal protein uS15 family. As to quaternary structure, part of the 30S ribosomal subunit. Forms a bridge to the 50S subunit in the 70S ribosome, contacting the 23S rRNA.

In terms of biological role, one of the primary rRNA binding proteins, it binds directly to 16S rRNA where it helps nucleate assembly of the platform of the 30S subunit by binding and bridging several RNA helices of the 16S rRNA. Forms an intersubunit bridge (bridge B4) with the 23S rRNA of the 50S subunit in the ribosome. The polypeptide is Small ribosomal subunit protein uS15 (Thermomicrobium roseum (strain ATCC 27502 / DSM 5159 / P-2)).